The following is a 316-amino-acid chain: 4-hydroxyphenylacetate decarboxylase activating enzyme (316 aa).

In terms of domain architecture, Radical SAM core spans 20 to 307 (HDGPGCRTTV…QDIFLDNGIA (288 aa)). [4Fe-4S] cluster is bound by residues cysteine 34, cysteine 38, cysteine 41, cysteine 60, cysteine 66, cysteine 69, and cysteine 105. 40–42 (WCA) contacts S-adenosyl-L-methionine. Residues 84 to 115 (NKPVIDWNICKDCESFECVNSCYYNAFKLCAK) form the 4Fe-4S ferredoxin-type domain. S-adenosyl-L-methionine-binding positions include glycine 144, 193–195 (DIK), and histidine 267.

This sequence belongs to the organic radical-activating enzymes family. Monomer. [4Fe-4S] cluster serves as cofactor.

The catalysed reaction is glycyl-[protein] + reduced [flavodoxin] + S-adenosyl-L-methionine = glycin-2-yl radical-[protein] + semiquinone [flavodoxin] + 5'-deoxyadenosine + L-methionine + H(+). Its function is as follows. Catalyzes activation of 4-hydroxyphenylacetate decarboxylase under anaerobic conditions by generation of an organic free radical on a glycine residue, via a homolytic cleavage of S-adenosyl-L-methionine (SAM). This Clostridioides difficile (strain CD196) (Peptoclostridium difficile) protein is 4-hydroxyphenylacetate decarboxylase activating enzyme.